Reading from the N-terminus, the 111-residue chain is BET1-like protein (111 aa).

Topologically, residues 1-86 (MADWARAQSP…MARSGQDNRK (86 aa)) are cytoplasmic. Phosphoserine is present on residues S9 and S37. Positions 15-77 (EILDRENKRM…TGSVKRFSTM (63 aa)) constitute a t-SNARE coiled-coil homology domain. A helical; Anchor for type IV membrane protein membrane pass occupies residues 87–107 (LLCGMAVGLIVAFFILSYFLS). The Lumenal segment spans residues 108–111 (RART).

As to quaternary structure, component of a SNARE complex consisting of STX5, YKT6, GOSR1 and BET1L. Interacts with STX5.

The protein resides in the golgi apparatus membrane. It is found in the golgi apparatus. It localises to the trans-Golgi network membrane. Functionally, vesicle SNARE required for targeting and fusion of retrograde transport vesicles with the Golgi complex. Required for the integrity of the Golgi complex. The sequence is that of BET1-like protein from Homo sapiens (Human).